The sequence spans 171 residues: uncharacterized protein (171 aa).

It belongs to the mimivirus L87/L94 family.

This is an uncharacterized protein from Acanthamoeba polyphaga (Amoeba).